The following is a 144-amino-acid chain: Deoxyuridine 5'-triphosphate nucleotidohydrolase (144 aa).

Residues 63-65 (RSG), Asn-76, and 80-82 (TID) each bind substrate.

It belongs to the dUTPase family. Requires Mg(2+) as cofactor.

It catalyses the reaction dUTP + H2O = dUMP + diphosphate + H(+). Its pathway is pyrimidine metabolism; dUMP biosynthesis; dUMP from dCTP (dUTP route): step 2/2. In terms of biological role, this enzyme is involved in nucleotide metabolism: it produces dUMP, the immediate precursor of thymidine nucleotides and it decreases the intracellular concentration of dUTP so that uracil cannot be incorporated into DNA. This Bacteroides fragilis (strain YCH46) protein is Deoxyuridine 5'-triphosphate nucleotidohydrolase.